The primary structure comprises 209 residues: Putative AgrB-like protein (209 aa).

The next 5 membrane-spanning stretches (helical) occupy residues 49-71 (ILFLVSYYFGLIKETIIMLAAFG), 82-102 (AKNSIVCTVMSLLMFVLGAYL), 105-125 (YLLFNNYMVLASFIIVNLLLF), 149-169 (QAVLMGMLLMAITLIIPDELI), and 173-193 (ISLSSYFEIISILPITYKVLG).

The protein belongs to the AgrB family.

Its subcellular location is the cell membrane. May be involved in the proteolytic processing of a quorum sensing system signal molecule precursor. This is Putative AgrB-like protein from Clostridium acetobutylicum (strain ATCC 824 / DSM 792 / JCM 1419 / IAM 19013 / LMG 5710 / NBRC 13948 / NRRL B-527 / VKM B-1787 / 2291 / W).